Reading from the N-terminus, the 230-residue chain is UPF0758 protein Daud_1467 (230 aa).

The region spanning T108–F230 is the MPN domain. Zn(2+) is bound by residues H179, H181, and D192. The JAMM motif motif lies at H179–D192.

The protein belongs to the UPF0758 family.

This Desulforudis audaxviator (strain MP104C) protein is UPF0758 protein Daud_1467.